The primary structure comprises 278 residues: Indole-3-glycerol phosphate synthase (278 aa).

This sequence belongs to the TrpC family.

It catalyses the reaction 1-(2-carboxyphenylamino)-1-deoxy-D-ribulose 5-phosphate + H(+) = (1S,2R)-1-C-(indol-3-yl)glycerol 3-phosphate + CO2 + H2O. The protein operates within amino-acid biosynthesis; L-tryptophan biosynthesis; L-tryptophan from chorismate: step 4/5. This Pseudomonas fluorescens (strain ATCC BAA-477 / NRRL B-23932 / Pf-5) protein is Indole-3-glycerol phosphate synthase.